The primary structure comprises 159 residues: Ribosomal RNA large subunit methyltransferase H (159 aa).

Residues Leu76, Gly108, and 127–132 each bind S-adenosyl-L-methionine; that span reads LSRLTF.

The protein belongs to the RNA methyltransferase RlmH family. As to quaternary structure, homodimer.

The protein resides in the cytoplasm. It carries out the reaction pseudouridine(1915) in 23S rRNA + S-adenosyl-L-methionine = N(3)-methylpseudouridine(1915) in 23S rRNA + S-adenosyl-L-homocysteine + H(+). Its function is as follows. Specifically methylates the pseudouridine at position 1915 (m3Psi1915) in 23S rRNA. This is Ribosomal RNA large subunit methyltransferase H from Syntrophomonas wolfei subsp. wolfei (strain DSM 2245B / Goettingen).